Reading from the N-terminus, the 338-residue chain is Queuosine 5'-phosphate N-glycosylase/hydrolase (338 aa).

N-acetylmethionine is present on Met1. Queuine contacts are provided by His51, Phe235, Asp237, Asp311, Tyr312, and Asp316. The Nucleophile or transition state stabilizer role is filled by Asp237.

This sequence belongs to the QNG1 protein family. As to expression, highly expressed in liver.

The catalysed reaction is queuosine 5'-phosphate + H2O = queuine + D-ribose 5-phosphate. Catalyzes the hydrolysis of queuosine 5'-phosphate, releasing the nucleobase queuine (q). Is required for salvage of queuine from exogenous queuosine (Q) that is imported and then converted to queuosine 5'-phosphate intracellularly. This Mus musculus (Mouse) protein is Queuosine 5'-phosphate N-glycosylase/hydrolase.